The sequence spans 325 residues: tRNA(Ile)-lysidine synthase (325 aa).

34 to 39 (SGGADS) is a binding site for ATP.

This sequence belongs to the tRNA(Ile)-lysidine synthase family.

The protein resides in the cytoplasm. The enzyme catalyses cytidine(34) in tRNA(Ile2) + L-lysine + ATP = lysidine(34) in tRNA(Ile2) + AMP + diphosphate + H(+). Its function is as follows. Ligates lysine onto the cytidine present at position 34 of the AUA codon-specific tRNA(Ile) that contains the anticodon CAU, in an ATP-dependent manner. Cytidine is converted to lysidine, thus changing the amino acid specificity of the tRNA from methionine to isoleucine. The protein is tRNA(Ile)-lysidine synthase of Rhodococcus opacus (strain B4).